A 429-amino-acid chain; its full sequence is Enolase 2 (429 aa).

Residue glutamine 163 participates in (2R)-2-phosphoglycerate binding. The Proton donor role is filled by glutamate 205. The Mg(2+) site is built by aspartate 242, glutamate 286, and aspartate 313. Residues lysine 338, arginine 367, serine 368, and lysine 389 each contribute to the (2R)-2-phosphoglycerate site. Lysine 338 (proton acceptor) is an active-site residue.

The protein belongs to the enolase family. Mg(2+) is required as a cofactor.

It localises to the cytoplasm. It is found in the secreted. The protein localises to the cell surface. The catalysed reaction is (2R)-2-phosphoglycerate = phosphoenolpyruvate + H2O. The protein operates within carbohydrate degradation; glycolysis; pyruvate from D-glyceraldehyde 3-phosphate: step 4/5. Functionally, catalyzes the reversible conversion of 2-phosphoglycerate (2-PG) into phosphoenolpyruvate (PEP). It is essential for the degradation of carbohydrates via glycolysis. This chain is Enolase 2, found in Lactiplantibacillus plantarum (strain ATCC BAA-793 / NCIMB 8826 / WCFS1) (Lactobacillus plantarum).